We begin with the raw amino-acid sequence, 107 residues long: MRFLVSVAFLLTVSSLLVSGENNNPVPEDPCSKEGGVCVAVDRCPDEYKKPGLCPKQKARGIDCCAIAPRDTCASRGGECTTLDCGRMEQKDVNHDCPPGTKCCVWV.

A signal peptide spans 1 to 20 (MRFLVSVAFLLTVSSLLVSG).

This sequence belongs to the scoloptoxin-19 family. Contains 6 disulfide bonds. Expressed by the venom gland.

The protein resides in the secreted. The chain is U-scoloptoxin(19)-Sm1a from Scolopendra morsitans (Tanzanian blue ringleg centipede).